Consider the following 146-residue polypeptide: Hemoglobin subunit beta-2 (146 aa).

One can recognise a Globin domain in the interval phenylalanine 2 to histidine 146. N6-succinyllysine is present on lysine 17. Residues serine 44 and serine 50 each carry the phosphoserine modification. N6-succinyllysine is present on lysine 59. 2 residues coordinate heme b: histidine 63 and histidine 92. Arginine 104 is subject to Asymmetric dimethylarginine.

The protein belongs to the globin family. As to quaternary structure, heterotetramer of two alpha chains and two beta chains. As to expression, red blood cells.

Functionally, involved in oxygen transport from the lung to the various peripheral tissues. The sequence is that of Hemoglobin subunit beta-2 (HBB2) from Panthera pardus saxicolor (Northern Persian leopard).